The following is a 66-amino-acid chain: Large ribosomal subunit protein bL35 (66 aa).

2 stretches are compositionally biased toward basic residues: residues 1–26 and 38–48; these read MPKMKTHKGAAKRFKKTGSGKLKRSH and QKQKRKLRKSA. The tract at residues 1–48 is disordered; it reads MPKMKTHKGAAKRFKKTGSGKLKRSHAFTSHLFANKSQKQKRKLRKSA.

The protein belongs to the bacterial ribosomal protein bL35 family.

The protein is Large ribosomal subunit protein bL35 of Halalkalibacterium halodurans (strain ATCC BAA-125 / DSM 18197 / FERM 7344 / JCM 9153 / C-125) (Bacillus halodurans).